A 791-amino-acid chain; its full sequence is Major facilitator superfamily domain-containing protein 6 (791 aa).

A2 bears the N-acetylalanine mark. Position 10 is a phosphothreonine (T10). The segment at 22–47 is disordered; the sequence is LADPFNGISREPEPPSNETPSSTETS. Residues 37-47 show a composition bias toward low complexity; it reads SNETPSSTETS. Transmembrane regions (helical) follow at residues 73–93, 105–125, 132–152, 286–306, 335–355, and 369–389; these read VFYF…PVYY, LLVG…GVVA, KIVL…IGFV, AIFL…ASSV, WGLA…EVLI, and QIVF…ATQF. The tract at residues 407–427 is disordered; it reads EIPQVERNNSTESSEETPTTT. Residues 416 to 427 show a composition bias toward low complexity; it reads STESSEETPTTT. 6 helical membrane-spanning segments follow: residues 450-470, 479-499, 507-527, 544-564, 579-599, and 605-625; these read VLFV…FLYW, TTLF…AYFF, IGHI…YIYI, GVTH…AVPP, LGLG…YFGA, and GIGM…WLAV. 2 disordered regions span residues 662–687 and 723–791; these read MPRI…NKPA and LQGT…AGGH. The segment covering 750-768 has biased composition (polar residues); the sequence is SRNQPSPDAAASQTQTSPA. Residues 782-791 show a composition bias toward low complexity; that stretch reads QQAQLAAGGH.

Belongs to the major facilitator superfamily. MFSD6 family. May interact with HLA-B62. Widely expressed. Expression levels in peripheral blood mononuclear cells are highly variable between individuals, including no expression at all.

It is found in the membrane. The sequence is that of Major facilitator superfamily domain-containing protein 6 (MFSD6) from Homo sapiens (Human).